The chain runs to 365 residues: Peridinin-chlorophyll a-binding protein, chloroplastic (365 aa).

A chloroplast-targeting transit peptide spans 1–52 (MVRGARKAIAVGVAVAVACGLQKHLNFVPGPRHAAPVAAAAASMMMAPAAFA). 2 repeat units span residues 53-215 (DEIG…VPSG) and 216-365 (DKIG…ASQR).

As to quaternary structure, monomer.

It is found in the plastid. Its subcellular location is the chloroplast. Functionally, water-soluble antenna for capture of solar energy in the blue-green range. Peridinin is an asymmetric carotenoid. The chain is Peridinin-chlorophyll a-binding protein, chloroplastic from Symbiodinium sp. (Dinoflagellate).